An 89-amino-acid polypeptide reads, in one-letter code: DNA/RNA-binding protein Alba 2 (89 aa).

Lysine 12 is modified (N6-acetyllysine).

Belongs to the histone-like Alba family. In terms of processing, acetylated. Acetylation at Lys-12 decreases DNA-binding affinity.

The protein localises to the cytoplasm. Its subcellular location is the chromosome. Functionally, binds double-stranded DNA tightly but without sequence specificity. Involved in DNA compaction. This chain is DNA/RNA-binding protein Alba 2, found in Saccharolobus shibatae (strain ATCC 51178 / DSM 5389 / JCM 8931 / NBRC 15437 / B12) (Sulfolobus shibatae).